The following is a 244-amino-acid chain: NAD(P)H-hydrate epimerase (244 aa).

Positions 35-240 (IREIDSLAME…SIGVPLELLR (206 aa)) constitute a YjeF N-terminal domain. (6S)-NADPHX is bound at residue 82–86 (NNGGD). K(+) is bound by residues Asn83 and Asp150. Residues 154–160 (GTGAKPP), Tyr165, and Asp183 contribute to the (6S)-NADPHX site. Thr186 is a binding site for K(+).

Belongs to the NnrE/AIBP family. K(+) serves as cofactor.

The enzyme catalyses (6R)-NADHX = (6S)-NADHX. The catalysed reaction is (6R)-NADPHX = (6S)-NADPHX. Functionally, catalyzes the epimerization of the S- and R-forms of NAD(P)HX, a damaged form of NAD(P)H that is a result of enzymatic or heat-dependent hydration. This is a prerequisite for the S-specific NAD(P)H-hydrate dehydratase to allow the repair of both epimers of NAD(P)HX. This chain is NAD(P)H-hydrate epimerase, found in Rhodopirellula baltica (strain DSM 10527 / NCIMB 13988 / SH1).